A 108-amino-acid polypeptide reads, in one-letter code: Large ribosomal subunit protein uL24 (108 aa).

It belongs to the universal ribosomal protein uL24 family. As to quaternary structure, part of the 50S ribosomal subunit.

Functionally, one of two assembly initiator proteins, it binds directly to the 5'-end of the 23S rRNA, where it nucleates assembly of the 50S subunit. In terms of biological role, one of the proteins that surrounds the polypeptide exit tunnel on the outside of the subunit. The protein is Large ribosomal subunit protein uL24 of Mycoplasmopsis synoviae (strain 53) (Mycoplasma synoviae).